The primary structure comprises 71 residues: Translation initiation factor IF-1 (71 aa).

The S1-like domain occupies 1–71 (MSKDDLIQFT…LTKGRVIHRH (71 aa)).

It belongs to the IF-1 family. As to quaternary structure, component of the 30S ribosomal translation pre-initiation complex which assembles on the 30S ribosome in the order IF-2 and IF-3, IF-1 and N-formylmethionyl-tRNA(fMet); mRNA recruitment can occur at any time during PIC assembly.

It is found in the cytoplasm. Its function is as follows. One of the essential components for the initiation of protein synthesis. Stabilizes the binding of IF-2 and IF-3 on the 30S subunit to which N-formylmethionyl-tRNA(fMet) subsequently binds. Helps modulate mRNA selection, yielding the 30S pre-initiation complex (PIC). Upon addition of the 50S ribosomal subunit IF-1, IF-2 and IF-3 are released leaving the mature 70S translation initiation complex. The polypeptide is Translation initiation factor IF-1 (Rickettsia prowazekii (strain Madrid E)).